Consider the following 327-residue polypeptide: uncharacterized protein (327 aa).

Residues 12–79 (KRLDEFLAKE…LKKELDLEIE (68 aa)) form the S4 RNA-binding domain. The active site involves aspartate 136.

This sequence belongs to the pseudouridine synthase RluA family.

It catalyses the reaction a uridine in RNA = a pseudouridine in RNA. This is an uncharacterized protein from Helicobacter pylori (strain ATCC 700392 / 26695) (Campylobacter pylori).